The following is a 428-amino-acid chain: Enolase (428 aa).

Glutamine 173 is a (2R)-2-phosphoglycerate binding site. Glutamate 217 serves as the catalytic Proton donor. Mg(2+)-binding residues include aspartate 253, glutamate 294, and aspartate 320. (2R)-2-phosphoglycerate-binding residues include lysine 345, arginine 374, serine 375, and lysine 396. The active-site Proton acceptor is lysine 345.

Belongs to the enolase family. Mg(2+) serves as cofactor.

The protein resides in the cytoplasm. It localises to the secreted. Its subcellular location is the cell surface. It carries out the reaction (2R)-2-phosphoglycerate = phosphoenolpyruvate + H2O. It participates in carbohydrate degradation; glycolysis; pyruvate from D-glyceraldehyde 3-phosphate: step 4/5. Functionally, catalyzes the reversible conversion of 2-phosphoglycerate (2-PG) into phosphoenolpyruvate (PEP). It is essential for the degradation of carbohydrates via glycolysis. This Methanosarcina barkeri (strain Fusaro / DSM 804) protein is Enolase.